The chain runs to 254 residues: Dihydroorotate dehydrogenase B (NAD(+)), electron transfer subunit (254 aa).

The FAD-binding FR-type domain maps to 1-99 (MLQTEMKVIQ…LGPLGKGFDL (99 aa)). Residues 50-53 (RPIS), 67-69 (LYR), and 74-75 (GT) each bind FAD. Residues cysteine 218, cysteine 223, cysteine 226, and cysteine 241 each contribute to the [2Fe-2S] cluster site.

This sequence belongs to the PyrK family. In terms of assembly, heterotetramer of 2 PyrK and 2 PyrD type B subunits. Requires [2Fe-2S] cluster as cofactor. FAD serves as cofactor.

The protein operates within pyrimidine metabolism; UMP biosynthesis via de novo pathway; orotate from (S)-dihydroorotate (NAD(+) route): step 1/1. Its function is as follows. Responsible for channeling the electrons from the oxidation of dihydroorotate from the FMN redox center in the PyrD type B subunit to the ultimate electron acceptor NAD(+). The protein is Dihydroorotate dehydrogenase B (NAD(+)), electron transfer subunit of Listeria innocua serovar 6a (strain ATCC BAA-680 / CLIP 11262).